An 87-amino-acid polypeptide reads, in one-letter code: MVNMKASMFLTFAGLVLLFVVCFASESEEKEFPKEMLSSIFAVDNDFKQEERDCAGYMRECKEKLCCSGYVCSSRWKRCVLPAPWRR.

Residues 1 to 24 (MVNMKASMFLTFAGLVLLFVVCFA) form the signal peptide. Positions 25 to 52 (SESEEKEFPKEMLSSIFAVDNDFKQEER) are excised as a propeptide. 3 cysteine pairs are disulfide-bonded: cysteine 54–cysteine 67, cysteine 61–cysteine 72, and cysteine 66–cysteine 79.

This sequence belongs to the neurotoxin 10 (Hwtx-1) family. 51 (Hntx-8) subfamily. Hntx-8 sub-subfamily. Expressed by the venom gland.

The protein resides in the secreted. In terms of biological role, ion channel inhibitor. The chain is U3-theraphotoxin-Hhn1g from Cyriopagopus hainanus (Chinese bird spider).